Consider the following 497-residue polypeptide: MSTDKKTLGEKPNSTKPELSEELIAELKKQRILEKNRPYKKMIYVDNKVQRKHRHENIAFLKTLHENKESDVPKKRRGRKPKHAPLKEKNNLKLFDILEGSLKSHIENDDTNTVINLLTEAWEKKSKKKQKNITLSNKEIISVLAKFELPEDEIIYVLDELRDKGIQLQHDVEEHIHEFRANQDLSIIDEDIEELTSKNISNRDKVDDNVRFFLGSLDFSKMLDFESEQRIAKVLNSTDEESRKYAINQLVTSNLRLVVSIAKKHLERGLDFNDLIQEGNLGLLKAISKFNWSLGNKFSTYATWWIKQAITRAIADQARTVRIPVHMVETINRLAKAERALYQELGREPTDEELAEKMGGQAEGFNVKKIAEIKRLSLDPVSLDKTVGHDEESQFGDFVKDTDAQTPDEFTESRSNSEKIDELLNNNLSEQEELIVRMRIGMPPYNEPKTLDEVGQKILIPREKIRQIENKAIRKLRHAVRNNPISMSFLRINEKKD.

Disordered regions lie at residues 1–20 and 62–86; these read MSTD…PELS and KTLH…HAPL. A compositionally biased stretch (basic and acidic residues) spans 63–73; that stretch reads TLHENKESDVP. Residues 74–84 show a composition bias toward basic residues; that stretch reads KKRRGRKPKHA. The interval 250-320 is sigma-70 factor domain-2; that stretch reads LVTSNLRLVV…TRAIADQART (71 aa). An Interaction with polymerase core subunit RpoC motif is present at residues 274 to 277; sequence DLIQ. The segment at 329–410 is sigma-70 factor domain-3; that stretch reads ETINRLAKAE…DTDAQTPDEF (82 aa). Residues 423 to 478 form a sigma-70 factor domain-4 region; the sequence is LLNNNLSEQEELIVRMRIGMPPYNEPKTLDEVGQKILIPREKIRQIENKAIRKLRH. A DNA-binding region (H-T-H motif) is located at residues 451 to 470; it reads LDEVGQKILIPREKIRQIEN.

Belongs to the sigma-70 factor family. RpoD/SigA subfamily. As to quaternary structure, interacts transiently with the RNA polymerase catalytic core.

The protein resides in the cytoplasm. Its function is as follows. Sigma factors are initiation factors that promote the attachment of RNA polymerase to specific initiation sites and are then released. This sigma factor is the primary sigma factor during exponential growth. This chain is RNA polymerase sigma factor SigA, found in Mycoplasma genitalium (strain ATCC 33530 / DSM 19775 / NCTC 10195 / G37) (Mycoplasmoides genitalium).